Reading from the N-terminus, the 203-residue chain is Ras-like protein family member 10A (203 aa).

The segment at 1-203 (MGGSLRVAVL…ALHPARCSLM (203 aa)) is small GTPase-like. Position 11 to 18 (11 to 18 (GAPGVGKT)) interacts with GTP. Positions 33–42 (HRPTDGPRLY) match the Effector region motif. GTP contacts are provided by residues 59–62 (DGDV) and 129–132 (NKRD). C200 is subject to Cysteine methyl ester. The S-farnesyl cysteine moiety is linked to residue C200. A propeptide spans 201–203 (SLM) (removed in mature form).

The protein belongs to the small GTPase superfamily. Ras family. In terms of processing, isoprenylation is essential for nucleolar localization, and the proliferation-inhibiting activity of RASL10A. As to expression, expression appears to be strictly limited to the central nervous system.

Its subcellular location is the cell membrane. The protein localises to the nucleus. It localises to the nucleolus. The enzyme catalyses GTP + H2O = GDP + phosphate + H(+). Potent inhibitor of cellular proliferation. The chain is Ras-like protein family member 10A (RASL10A) from Homo sapiens (Human).